The following is a 287-amino-acid chain: MRSLHDVPAPAKLNLFLHITGRRADGYHLLQSVFMLLDWHDTLHFDRRGDGQISREDLSGMALPADDLIVRAARALQQATGCRAGVHIGVEKRLPAQAGMGGGSSDAASTLIALNRLWQLNLTRRELQRIALDLGADVPFFLCGNSAWVEGIGEHITPLEQAHALPPQRFVVVKPEAGLETLSIFRDATLKRDHAHATIEDFAADHYGFGQNDLQPVAERLQPEVKKAIDWLNSLKLHARMTGSGSAVFAPLTQTIDLKDAPGAWNVRVCSNLQAHPLKDWLKDESL.

Residue lysine 12 is part of the active site. 95–105 (PAQAGMGGGSS) contributes to the ATP binding site. The active site involves aspartate 137.

The protein belongs to the GHMP kinase family. IspE subfamily.

It catalyses the reaction 4-CDP-2-C-methyl-D-erythritol + ATP = 4-CDP-2-C-methyl-D-erythritol 2-phosphate + ADP + H(+). The protein operates within isoprenoid biosynthesis; isopentenyl diphosphate biosynthesis via DXP pathway; isopentenyl diphosphate from 1-deoxy-D-xylulose 5-phosphate: step 3/6. In terms of biological role, catalyzes the phosphorylation of the position 2 hydroxy group of 4-diphosphocytidyl-2C-methyl-D-erythritol. The sequence is that of 4-diphosphocytidyl-2-C-methyl-D-erythritol kinase from Delftia acidovorans (strain DSM 14801 / SPH-1).